We begin with the raw amino-acid sequence, 224 residues long: Peroxiredoxin-6 (224 aa).

The Thioredoxin domain maps to 5 to 169; it reads LLLGDEAPNF…ILRVIISLQL (165 aa). The required and sufficient for targeting to lysosomes and lamellar bodies stretch occupies residues 31–40; that stretch reads DSWGILFSHP. Thr-44 carries the phosphothreonine modification. Cys-47 serves as the catalytic Cysteine sulfenic acid (-SOH) intermediate; for peroxidase activity. Position 63 is an N6-acetyllysine (Lys-63). Residue Tyr-89 is modified to Phosphotyrosine. The active-site For phospholipase activity is Asp-140. At Thr-177 the chain carries Phosphothreonine; by MAPK. Lys-209 bears the N6-acetyllysine; alternate mark. Position 209 is an N6-succinyllysine; alternate (Lys-209).

Belongs to the peroxiredoxin family. Prx6 subfamily. As to quaternary structure, homodimer. Interacts with GSTP1; mediates PRDX6 glutathionylation and regeneration. Interacts with APEX1. Interacts with STH. May interact with FAM168B. May interact with HTR2A. Post-translationally, irreversibly inactivated by overoxidation of Cys-47 to sulfinic acid (Cys-SO(2)H) and sulfonic acid (Cys-SO(3)H) forms upon oxidative stress. Phosphorylation at Thr-177 by MAP kinases increases the phospholipase activity of the enzyme. The phosphorylated form exhibits a greater lysophosphatidylcholine acyltransferase activity compared to the non-phosphorylated form.

It is found in the cytoplasm. The protein localises to the lysosome. It catalyses the reaction a hydroperoxide + 2 glutathione = an alcohol + glutathione disulfide + H2O. The enzyme catalyses a 1,2-diacyl-sn-glycero-3-phosphocholine + H2O = a 1-acyl-sn-glycero-3-phosphocholine + a fatty acid + H(+). It carries out the reaction a 1-acyl-sn-glycero-3-phosphocholine + an acyl-CoA = a 1,2-diacyl-sn-glycero-3-phosphocholine + CoA. The catalysed reaction is 1-hexadecanoyl-sn-glycero-3-phosphocholine + hexadecanoyl-CoA = 1,2-dihexadecanoyl-sn-glycero-3-phosphocholine + CoA. It catalyses the reaction 1,2-dihexadecanoyl-sn-glycero-3-phosphocholine + H2O = 1-hexadecanoyl-sn-glycero-3-phosphocholine + hexadecanoate + H(+). Its function is as follows. Thiol-specific peroxidase that catalyzes the reduction of hydrogen peroxide and organic hydroperoxides to water and alcohols, respectively. Can reduce H(2)O(2) and short chain organic, fatty acid, and phospholipid hydroperoxides. Also has phospholipase activity, and can therefore either reduce the oxidized sn-2 fatty acyl group of phospholipids (peroxidase activity) or hydrolyze the sn-2 ester bond of phospholipids (phospholipase activity). These activities are dependent on binding to phospholipids at acidic pH and to oxidized phospholipds at cytosolic pH. Plays a role in cell protection against oxidative stress by detoxifying peroxides and in phospholipid homeostasis. Exhibits acyl-CoA-dependent lysophospholipid acyltransferase which mediates the conversion of lysophosphatidylcholine (1-acyl-sn-glycero-3-phosphocholine or LPC) into phosphatidylcholine (1,2-diacyl-sn-glycero-3-phosphocholine or PC). Shows a clear preference for LPC as the lysophospholipid and for palmitoyl CoA as the fatty acyl substrate. The polypeptide is Peroxiredoxin-6 (PRDX6) (Sus scrofa (Pig)).